The following is a 349-amino-acid chain: MPVERMRMRPWLEEQINSNTIPGLKWLNKEKKIFQIPWMHAARHGWDVEKDAPLFRNWAIHTGKHQPGIDKPDPKTWKANFRCAMNSLPDIEEVKDRSIKKGNNAFRVYRMLPLSERPSKKGKKPKTEKEERVKHIKQEPVESSLGLSNGVSGFSPEYAVLTSAIKNEVDSTVNIIVVGQSHLDSNIEDQEIVTNPPDICQVVEVTTESDDQPVSMSELYPLQISPVSSYAESETTDSVASDEENAEGRPHWRKRSIEGKQYLSNMGTRNTYLLPSMATFVTSNKPDLQVTIKEDSCPMPYNSSWPPFTDLPLPAPVTPTPSSSRPDRETRASVIKKTSDITQARVKSC.

The segment at residues 5-113 (RMRMRPWLEE…NAFRVYRMLP (109 aa)) is a DNA-binding region (IRF tryptophan pentad repeat). Lys-75 and Lys-78 each carry N6-acetyllysine. Lys-137 participates in a covalent cross-link: Glycyl lysine isopeptide (Lys-Gly) (interchain with G-Cter in SUMO); alternate. Lys-137 participates in a covalent cross-link: Glycyl lysine isopeptide (Lys-Gly) (interchain with G-Cter in SUMO2); alternate. Lys-166 participates in a covalent cross-link: Glycyl lysine isopeptide (Lys-Gly) (interchain with G-Cter in SUMO). A Phosphoserine modification is found at Ser-225. The segment covering 230–239 (YAESETTDSV) has biased composition (polar residues). Residues 230 to 253 (YAESETTDSVASDEENAEGRPHWR) are disordered. Residue Lys-260 forms a Glycyl lysine isopeptide (Lys-Gly) (interchain with G-Cter in SUMO2) linkage. Lys-293 participates in a covalent cross-link: Glycyl lysine isopeptide (Lys-Gly) (interchain with G-Cter in SUMO). Residues 303 to 349 (SSWPPFTDLPLPAPVTPTPSSSRPDRETRASVIKKTSDITQARVKSC) form a disordered region.

This sequence belongs to the IRF family. As to quaternary structure, interacts with BRD7, IRF2BP1 and IRF2BP2. Interacts with CREBBP in growing cells; the interaction acetylates IRF2 and regulates IRF2-dependent H4 promoter activity. Acetylated by CBP/ p300 during cell-growth. Acetylation on Lys-75 is required for stimulation of H4 promoter activity. In terms of processing, the major sites of sumoylation are Lys-137 and Lys-293. Sumoylation with SUMO1 increases its transcriptional repressor activity on IRF1 and diminishes its ability to activate ISRE and H4 promoter.

It localises to the nucleus. In terms of biological role, specifically binds to the upstream regulatory region of type I IFN and IFN-inducible MHC class I genes (the interferon consensus sequence (ICS)) and represses those genes. Also acts as an activator for several genes including H4 and IL7. Constitutively binds to the ISRE promoter to activate IL7. Involved in cell cycle regulation through binding the site II (HiNF-M) promoter region of H4 and activating transcription during cell growth. Antagonizes IRF1 transcriptional activation. The sequence is that of Interferon regulatory factor 2 (Irf2) from Mus musculus (Mouse).